The chain runs to 354 residues: UDP-N-acetylglucosamine--N-acetylmuramyl-(pentapeptide) pyrophosphoryl-undecaprenol N-acetylglucosamine transferase (354 aa).

UDP-N-acetyl-alpha-D-glucosamine is bound by residues 11–13, Asn-117, Arg-160, Ser-186, and Gln-288; that span reads TGG.

It belongs to the glycosyltransferase 28 family. MurG subfamily.

It localises to the cell inner membrane. The catalysed reaction is di-trans,octa-cis-undecaprenyl diphospho-N-acetyl-alpha-D-muramoyl-L-alanyl-D-glutamyl-meso-2,6-diaminopimeloyl-D-alanyl-D-alanine + UDP-N-acetyl-alpha-D-glucosamine = di-trans,octa-cis-undecaprenyl diphospho-[N-acetyl-alpha-D-glucosaminyl-(1-&gt;4)]-N-acetyl-alpha-D-muramoyl-L-alanyl-D-glutamyl-meso-2,6-diaminopimeloyl-D-alanyl-D-alanine + UDP + H(+). It functions in the pathway cell wall biogenesis; peptidoglycan biosynthesis. Its function is as follows. Cell wall formation. Catalyzes the transfer of a GlcNAc subunit on undecaprenyl-pyrophosphoryl-MurNAc-pentapeptide (lipid intermediate I) to form undecaprenyl-pyrophosphoryl-MurNAc-(pentapeptide)GlcNAc (lipid intermediate II). This is UDP-N-acetylglucosamine--N-acetylmuramyl-(pentapeptide) pyrophosphoryl-undecaprenol N-acetylglucosamine transferase from Rickettsia canadensis (strain McKiel).